The sequence spans 323 residues: Serine racemase (323 aa).

ATP-binding residues include Ser32, Ser33, and Lys52. Lys57 (proton acceptor) is an active-site residue. A Lysino-D-alanine (Lys); alternate modification is found at Lys57. At Lys57 the chain carries N6-(pyridoxal phosphate)lysine; alternate. Thr79 is a binding site for Ca(2+). Ser82 (proton acceptor) is an active-site residue. Pyridoxal 5'-phosphate is bound at residue Asn84. Gln87 and Tyr119 together coordinate ATP. Residue Asp176 participates in Mg(2+) binding. Pyridoxal 5'-phosphate contacts are provided by Gly183, Gly184, Gly185, Gly186, and Leu187. Ca(2+) contacts are provided by Glu208, Gly212, and Asp214. 3 residues coordinate Mg(2+): Glu208, Gly212, and Asp214. 3 residues coordinate Mn(2+): Glu208, Gly212, and Asp214. Lys277 is an ATP binding site. Residue Ser308 participates in pyridoxal 5'-phosphate binding. An ATP-binding site is contributed by Asn311.

Belongs to the serine/threonine dehydratase family. As to quaternary structure, homodimer. Mg(2+) is required as a cofactor. The cofactor is Mn(2+). Ca(2+) serves as cofactor. Requires pyridoxal 5'-phosphate as cofactor. Modification of the active site Lys by its substrate Ser to lysino-D-alanine reduces but does not abolish enzyme activity.

The catalysed reaction is L-serine = D-serine. It catalyses the reaction L-serine = pyruvate + NH4(+). The enzyme catalyses D-serine = pyruvate + NH4(+). With respect to regulation, allosterically activated by ATP, by magnesium, and possibly also by other divalent metal cations. Functionally, catalyzes the synthesis of D-serine from L-serine. Has dehydratase activity towards both L-serine and D-serine. The polypeptide is Serine racemase (Schizosaccharomyces pombe (strain 972 / ATCC 24843) (Fission yeast)).